The chain runs to 217 residues: Resolvase homolog YneB (217 aa).

The 146-residue stretch at 2 to 147 (KALIYARVST…RGMKRAVKNG (146 aa)) folds into the Resolvase/invertase-type recombinase catalytic domain. Residue S10 is the O-(5'-phospho-DNA)-serine intermediate of the active site.

The protein belongs to the site-specific recombinase resolvase family.

The sequence is that of Resolvase homolog YneB (yneB) from Bacillus subtilis (strain 168).